Reading from the N-terminus, the 196-residue chain is MSNQIKLLVGLANPGLEYKRTRHNAGAWVVEELARIHNIPMREEAKFFGLTGRIQTNGQDLRLLIPTTFMNLSGKAIASIAKFYQIKPEEILVAHDELDLPPGVAKFKKGGGHGGHNGLRDTISKLANTKEFYRLRIGIGHPGHKDKVAGFVLGKAPTKEQELIDAAVDESTRCLDILLKDGLSKAQNRLHTFKAE.

Y18 is a tRNA binding site. The Proton acceptor role is filled by H23. The tRNA site is built by F69, N71, and N117.

It belongs to the PTH family. In terms of assembly, monomer.

The protein resides in the cytoplasm. The catalysed reaction is an N-acyl-L-alpha-aminoacyl-tRNA + H2O = an N-acyl-L-amino acid + a tRNA + H(+). In terms of biological role, hydrolyzes ribosome-free peptidyl-tRNAs (with 1 or more amino acids incorporated), which drop off the ribosome during protein synthesis, or as a result of ribosome stalling. Catalyzes the release of premature peptidyl moieties from peptidyl-tRNA molecules trapped in stalled 50S ribosomal subunits, and thus maintains levels of free tRNAs and 50S ribosomes. In Aliivibrio salmonicida (strain LFI1238) (Vibrio salmonicida (strain LFI1238)), this protein is Peptidyl-tRNA hydrolase.